A 432-amino-acid chain; its full sequence is Protein prenyltransferase alpha subunit repeat-containing protein 1-A (432 aa).

PFTA repeat units follow at residues E86 to P119, K121 to L154, E179 to K212, D218 to T251, E294 to L327, and S395 to H432.

Belongs to the protein prenyltransferase subunit alpha family.

This chain is Protein prenyltransferase alpha subunit repeat-containing protein 1-A (ptar1-a), found in Xenopus laevis (African clawed frog).